We begin with the raw amino-acid sequence, 192 residues long: Xanthine phosphoribosyltransferase (192 aa).

Residues L20 and N27 each contribute to the xanthine site. 5-phospho-alpha-D-ribose 1-diphosphate is bound at residue 128 to 132 (ANGQA). K156 is a xanthine binding site.

The protein belongs to the purine/pyrimidine phosphoribosyltransferase family. Xpt subfamily. In terms of assembly, homodimer.

It is found in the cytoplasm. It carries out the reaction XMP + diphosphate = xanthine + 5-phospho-alpha-D-ribose 1-diphosphate. The protein operates within purine metabolism; XMP biosynthesis via salvage pathway; XMP from xanthine: step 1/1. Functionally, converts the preformed base xanthine, a product of nucleic acid breakdown, to xanthosine 5'-monophosphate (XMP), so it can be reused for RNA or DNA synthesis. This is Xanthine phosphoribosyltransferase from Lacticaseibacillus casei (strain BL23) (Lactobacillus casei).